The chain runs to 554 residues: Exonuclease V, mitochondrial (554 aa).

Residues 1–17 (MLRCRSSINILQLHSRF) constitute a mitochondrion transit peptide. Residues Cys-138, Cys-522, Cys-525, and Cys-531 each coordinate [4Fe-4S] cluster.

This sequence belongs to the EXO5 family. As to quaternary structure, monomer. Mg(2+) serves as cofactor. It depends on [4Fe-4S] cluster as a cofactor.

It is found in the mitochondrion. Its function is as follows. Single strand DNA specific 5'exonuclease involved in mitochondrial DNA replication and recombination. Releases dinucleotides as main products of catalysis. Has the capacity to slide across 5'double-stranded DNA or 5'RNA sequences and resumes cutting two nucleotides downstream of the double-stranded-to-single-stranded junction or RNA-to-DNA junction, respectively. This is Exonuclease V, mitochondrial (EXO5) from Vanderwaltozyma polyspora (strain ATCC 22028 / DSM 70294 / BCRC 21397 / CBS 2163 / NBRC 10782 / NRRL Y-8283 / UCD 57-17) (Kluyveromyces polysporus).